A 108-amino-acid chain; its full sequence is Cell wall protein PGA48 (108 aa).

A signal peptide spans M1–A17. N-linked (GlcNAc...) asparagine glycans are attached at residues N18, N41, and N77. N84 is lipidated: GPI-anchor amidated asparagine. Residues G85–I108 constitute a propeptide, removed in mature form.

It belongs to the SED1 family. The GPI-anchor is attached to the protein in the endoplasmic reticulum and serves to target the protein to the cell surface. There, the glucosamine-inositol phospholipid moiety is cleaved off and the GPI-modified mannoprotein is covalently attached via its lipidless GPI glycan remnant to the 1,6-beta-glucan of the outer cell wall layer.

Its subcellular location is the secreted. The protein resides in the cell wall. The protein localises to the membrane. In terms of biological role, cell wall protein that plays a role in adaptation and resistance to cell wall stress. The chain is Cell wall protein PGA48 (PGA48) from Candida albicans (strain SC5314 / ATCC MYA-2876) (Yeast).